Reading from the N-terminus, the 470-residue chain is MAKFFALKNFTALSDLHPNMANLKIIGIVIGKTDVKGFPDRKNIGSERYTFSFTIRDSPNHFVNVSSWGSEDYIRSLSDNFKVGECVIIENPLIQRKETEREERFSPATPSNYKLLLSENHSMVKVCSPYEVDTKLLSLIHLPVKESRDYYSLADIVANGHSLDGRIINVLAAVRSVGEPKYFTTSDRRKGQRCEVKLFDETEPSFTMTCWDNESILLAQSWMARETVIFASDVRINFNKFQNCMAATVISKTIITVNPDTPEANILLNFIRENKETSIADEIDSYLKESVNLNTIVNVYTVEQLKGKALENEGKVDPFYGILYAYISTLNIDDETTKVVRNRCSSCGYIVNDASNTCTICSKDSSRSRSFCLSFDVLVDLTDHTGTLRSCSLSGSVAEETLGCTINEFLTMTSEQKTKLKWQLLLERSKIYLKLILSHRARGGLKVTILSCKLADPIEASRDLAGQGHT.

The segment at residues 167–272 (IINVLAAVRS…EANILLNFIR (106 aa)) is a DNA-binding region (OB).

It belongs to the MEIOB family. As to quaternary structure, component of a multiprotein complex with RPA2 and SPATA22. Interacts with SPATA22. Interacts with the complex BRME1:HSF2BP:BRCA2.

Its subcellular location is the cytoplasm. It is found in the nucleus. The protein localises to the chromosome. Functionally, single-stranded DNA-binding protein required for homologous recombination in meiosis I. Required for double strand breaks (DSBs) repair and crossover formation and promotion of faithful and complete synapsis. Not required for the initial loading of recombinases but required to maintain a proper number of RAD51 and DMC1 foci after the zygotene stage. May act by ensuring the stabilization of recombinases, which is required for successful homology search and meiotic recombination. Displays Single-stranded DNA 3'-5' exonuclease activity in vitro. The protein is Meiosis-specific with OB domain-containing protein of Rattus norvegicus (Rat).